Consider the following 430-residue polypeptide: UDP-N-acetylglucosamine 1-carboxyvinyltransferase 1 (430 aa).

Position 22 to 23 (22 to 23 (KN)) interacts with phosphoenolpyruvate. Position 93 (arginine 93) interacts with UDP-N-acetyl-alpha-D-glucosamine. Cysteine 117 serves as the catalytic Proton donor. 2-(S-cysteinyl)pyruvic acid O-phosphothioketal is present on cysteine 117. UDP-N-acetyl-alpha-D-glucosamine-binding positions include 122–126 (RPVDL), aspartate 305, and valine 327.

It belongs to the EPSP synthase family. MurA subfamily.

The protein resides in the cytoplasm. The catalysed reaction is phosphoenolpyruvate + UDP-N-acetyl-alpha-D-glucosamine = UDP-N-acetyl-3-O-(1-carboxyvinyl)-alpha-D-glucosamine + phosphate. Its pathway is cell wall biogenesis; peptidoglycan biosynthesis. Its function is as follows. Cell wall formation. Adds enolpyruvyl to UDP-N-acetylglucosamine. In Listeria monocytogenes serovar 1/2a (strain ATCC BAA-679 / EGD-e), this protein is UDP-N-acetylglucosamine 1-carboxyvinyltransferase 1.